Consider the following 246-residue polypeptide: Osmotin-like protein TPM-1 (246 aa).

An N-terminal signal peptide occupies residues 1–21 (MAYLRSSFVFFLLAFVTYTYA). Disulfide bonds link C30–C225, C72–C82, C87–C93, C141–C213, C146–C196, C154–C164, C168–C177, and C178–C183.

It belongs to the thaumatin family.

The protein resides in the vacuole. It carries out the reaction Endohydrolysis of (1-&gt;3)- or (1-&gt;4)-linkages in beta-D-glucans when the glucose residue whose reducing group is involved in the linkage to be hydrolyzed is itself substituted at C-3.. Functionally, antifungal protein that inhibits the growth of several phytopathogenic fungi (e.g. Trichothecium roseum, Fusarium oxysporum, Phytophthora citrophthora and Colletotrichum coccodes). May bind to beta-glucans and have beta-1,3-D-glucanase activity. The protein is Osmotin-like protein TPM-1 of Solanum lycopersicum (Tomato).